Consider the following 100-residue polypeptide: Large ribosomal subunit protein uL23 (100 aa).

It belongs to the universal ribosomal protein uL23 family. As to quaternary structure, part of the 50S ribosomal subunit. Contacts protein L29, and trigger factor when it is bound to the ribosome.

One of the early assembly proteins it binds 23S rRNA. One of the proteins that surrounds the polypeptide exit tunnel on the outside of the ribosome. Forms the main docking site for trigger factor binding to the ribosome. The protein is Large ribosomal subunit protein uL23 of Idiomarina loihiensis (strain ATCC BAA-735 / DSM 15497 / L2-TR).